The chain runs to 479 residues: Cardiolipin synthase A (479 aa).

2 helical membrane-spanning segments follow: residues 8–28 (FFGY…LHAV) and 38–58 (IAWA…YLVF). PLD phosphodiesterase domains follow at residues 218–245 (VNFR…GDEY) and 392–419 (QPGF…DNRS). Catalysis depends on residues H223, K225, D230, H397, K399, and D404.

Belongs to the phospholipase D family. Cardiolipin synthase subfamily. ClsA sub-subfamily.

It localises to the cell inner membrane. It catalyses the reaction 2 a 1,2-diacyl-sn-glycero-3-phospho-(1'-sn-glycerol) = a cardiolipin + glycerol. Functionally, catalyzes the reversible phosphatidyl group transfer from one phosphatidylglycerol molecule to another to form cardiolipin (CL) (diphosphatidylglycerol) and glycerol. The sequence is that of Cardiolipin synthase A from Pseudomonas putida (strain W619).